The chain runs to 237 residues: DNA repair protein RecO (237 aa).

The protein belongs to the RecO family.

In terms of biological role, involved in DNA repair and RecF pathway recombination. In Rickettsia peacockii (strain Rustic), this protein is DNA repair protein RecO.